We begin with the raw amino-acid sequence, 239 residues long: Probable fimbrial chaperone YehC (239 aa).

The first 31 residues, Met-1–Ala-31, serve as a signal peptide directing secretion.

It belongs to the periplasmic pilus chaperone family.

The protein localises to the periplasm. Functionally, part of the yehABCD fimbrial operon. Could contribute to adhesion to various surfaces in specific environmental niches. This Escherichia coli (strain K12) protein is Probable fimbrial chaperone YehC (yehC).